The sequence spans 314 residues: Beta-lactamase (314 aa).

A signal peptide (tat-type signal) is located at residues 1–39 (MHPSTSRPSRRTLLTATAGAALAAATLVPGTAHASSGGR). Residues 31 to 50 (TAHASSGGRGHGSGSVSDAE) are disordered. Serine 89 serves as the catalytic Acyl-ester intermediate. 259–261 (KTG) serves as a coordination point for substrate.

The protein belongs to the class-A beta-lactamase family. Post-translationally, predicted to be exported by the Tat system. The position of the signal peptide cleavage has been experimentally proven.

The enzyme catalyses a beta-lactam + H2O = a substituted beta-amino acid. This is Beta-lactamase from Streptomyces albus G.